Consider the following 181-residue polypeptide: Inner membrane-spanning protein YciB (181 aa).

The next 5 helical transmembrane spans lie at Ser24–His44, Asn49–Gln69, Leu81–Ile101, Leu119–Tyr139, and Phe149–Leu169.

Belongs to the YciB family.

It localises to the cell inner membrane. Its function is as follows. Plays a role in cell envelope biogenesis, maintenance of cell envelope integrity and membrane homeostasis. The sequence is that of Inner membrane-spanning protein YciB from Nitrosomonas eutropha (strain DSM 101675 / C91 / Nm57).